The sequence spans 112 residues: Probable insulin-like peptide beta-type 5 (112 aa).

Positions 1-19 are cleaved as a signal peptide; it reads MNSVFTIIFVLCALQVAAS. A propeptide spans 20 to 58 (removed; by convertase egl-3); that stretch reads FRQSFGPSMSEESASMQLLRELQHNMMESAHRPMPRARR. Intrachain disulfides connect Cys68–Cys97, Cys80–Cys110, Cys84–Cys111, and Cys96–Cys101.

The protein belongs to the insulin family. In terms of processing, may be processed by serine endoprotease bli-4. As to expression, expressed by ASI and ASJ sensory neurons.

The protein localises to the secreted. Probable insulin-like peptide which negatively regulates synapse development at the neuromuscular junctions. Probably acts as a daf-2/InsR agonist ligand to prevent dauer formation under optimal environmental conditions. Acts on AWC sensory neurons to regulate high salt chemotaxis responses. The chain is Probable insulin-like peptide beta-type 5 (ins-6) from Caenorhabditis elegans.